The chain runs to 419 residues: L-rhamnose isomerase (419 aa).

Mn(2+)-binding residues include His262, Asp294, and Asp296.

The protein belongs to the rhamnose isomerase family. In terms of assembly, homotetramer. It depends on Mn(2+) as a cofactor.

It is found in the cytoplasm. The enzyme catalyses L-rhamnopyranose = L-rhamnulose. It participates in carbohydrate degradation; L-rhamnose degradation; glycerone phosphate from L-rhamnose: step 1/3. Catalyzes the interconversion of L-rhamnose and L-rhamnulose. This chain is L-rhamnose isomerase, found in Citrobacter koseri (strain ATCC BAA-895 / CDC 4225-83 / SGSC4696).